A 59-amino-acid chain; its full sequence is U-myrmeciitoxin(01)-Mg5a (59 aa).

The first 21 residues, 1-21 (MRLSYLSLALAIIFVLTIMHA), serve as a signal peptide directing secretion. A propeptide spanning residues 22-38 (SNVEAKASADPEPDAVG) is cleaved from the precursor.

In terms of tissue distribution, expressed by the venom gland.

The protein resides in the secreted. Its function is as follows. May have antimicrobial properties, like most ant linear peptides. This chain is U-myrmeciitoxin(01)-Mg5a, found in Myrmecia gulosa (Red bulldog ant).